Consider the following 354-residue polypeptide: Histidinol-phosphate aminotransferase (354 aa).

An N6-(pyridoxal phosphate)lysine modification is found at lysine 222.

The protein belongs to the class-II pyridoxal-phosphate-dependent aminotransferase family. Histidinol-phosphate aminotransferase subfamily. Homodimer. Requires pyridoxal 5'-phosphate as cofactor.

The enzyme catalyses L-histidinol phosphate + 2-oxoglutarate = 3-(imidazol-4-yl)-2-oxopropyl phosphate + L-glutamate. The protein operates within amino-acid biosynthesis; L-histidine biosynthesis; L-histidine from 5-phospho-alpha-D-ribose 1-diphosphate: step 7/9. The chain is Histidinol-phosphate aminotransferase from Staphylococcus carnosus (strain TM300).